A 347-amino-acid polypeptide reads, in one-letter code: Isopentenyl-diphosphate delta-isomerase (347 aa).

9 to 10 provides a ligand contact to substrate; the sequence is RK. Residues serine 67, 68–70, serine 98, and asparagine 127 contribute to the FMN site; that span reads SMT. 98-100 provides a ligand contact to substrate; that stretch reads SQR. Glutamine 162 is a substrate binding site. Glutamate 163 is a binding site for Mg(2+). FMN-binding positions include lysine 194, threonine 224, 274–276, and 295–296; these read GIR and AA.

Belongs to the IPP isomerase type 2 family. In terms of assembly, homooctamer. Dimer of tetramers. FMN is required as a cofactor. Requires NADPH as cofactor. It depends on Mg(2+) as a cofactor.

It is found in the cytoplasm. It carries out the reaction isopentenyl diphosphate = dimethylallyl diphosphate. In terms of biological role, involved in the biosynthesis of isoprenoids. Catalyzes the 1,3-allylic rearrangement of the homoallylic substrate isopentenyl (IPP) to its allylic isomer, dimethylallyl diphosphate (DMAPP). This Cronobacter sakazakii (strain ATCC BAA-894) (Enterobacter sakazakii) protein is Isopentenyl-diphosphate delta-isomerase.